A 767-amino-acid chain; its full sequence is Cap-specific mRNA (nucleoside-2'-O-)-methyltransferase 2 (767 aa).

The region spanning 109-322 (ELCTQAWCKF…VYVVCLRYKG (214 aa)) is the Adrift-type SAM-dependent 2'-O-MTase domain. Lys-117 is an active-site residue. 3 residues coordinate S-adenosyl-L-methionine: Gly-148, Trp-167, and Asp-235. Asp-235 is a catalytic residue. The Proton acceptor role is filled by Lys-275.

The protein resides in the nucleus. The protein localises to the cytoplasm. The enzyme catalyses a 5'-end (N(7)-methyl 5'-triphosphoguanosine)-(2'-O-methyl-ribonucleoside)-(ribonucleotide) in mRNA + S-adenosyl-L-methionine = a 5'-end (N(7)-methyl 5'-triphosphoguanosine)-(2'-O-methyl-ribonucleoside)-(2'-O-methyl-ribonucleotide) in mRNA + S-adenosyl-L-homocysteine + H(+). Its function is as follows. S-adenosyl-L-methionine-dependent methyltransferase that mediates mRNA cap2 2'-O-ribose methylation to the 5'-cap structure of mRNAs. Methylates the ribose of the second nucleotide of a m(7)GpppG-capped mRNA and small nuclear RNA (snRNA) (cap0) to produce m(7)GpppRmpNm (cap2). Recognizes a guanosine cap on RNA independently of its N(7) methylation status. Display cap2 methylation on both cap0 and cap1. Displays a preference for cap1 RNAs. This is Cap-specific mRNA (nucleoside-2'-O-)-methyltransferase 2 (Cmtr2) from Mus musculus (Mouse).